The sequence spans 673 residues: FLYWCH-type zinc finger-containing protein 1 (673 aa).

Residues 1 to 62 (MPLPEPSEQD…SSTATLPNNT (62 aa)) form a disordered region. Phosphoserine is present on S21. Residues 47-62 (VASQETSSTATLPNNT) show a composition bias toward polar residues. 2 FLYWCH-type zinc fingers span residues 92–150 (FLKT…DHCH) and 235–293 (FLKT…SHCH). K110 participates in a covalent cross-link: Glycyl lysine isopeptide (Lys-Gly) (interchain with G-Cter in SUMO2). Basic and acidic residues predominate over residues 147–158 (DHCHPPEKEGLD). Residues 147 to 178 (DHCHPPEKEGLDRKKRHRGRPPSSALPEGAEV) are disordered. A phosphoserine mark is found at S294 and S339. The segment at 351 to 402 (LSRSKSKSKSKSRSKSKSKSRSRSRKRAKKQQESSQEPPEEDQDVDPRGPEF) is disordered. Residues 354–379 (SKSKSKSKSRSKSKSKSRSRSRKRAK) show a composition bias toward basic residues. 3 FLYWCH-type zinc fingers span residues 402 to 460 (FLKT…SHCH), 490 to 548 (FLKT…RHCH), and 581 to 639 (FLRT…SHCH). The disordered stretch occupies residues 646 to 673 (LEALRQREKAPSAAKKKKKKKKKKKGIH). Basic residues predominate over residues 659–673 (AKKKKKKKKKKKGIH). K666 is covalently cross-linked (Glycyl lysine isopeptide (Lys-Gly) (interchain with G-Cter in SUMO2)).

Interacts with CTNNB1 (when unphosphorylated), perhaps preventing interaction of CTNNB1 with TCF4, and thereby regulating transcription activation; phosphorylation of CTNNB1 may inhibit the interaction.

The protein resides in the nucleus. It localises to the chromosome. It is found in the centromere. In terms of biological role, transcription cofactor. Negatively regulates transcription activation by catenin beta-1 CTNNB1, perhaps acting by competing with TCF4 for CTNNB1 binding. May play a role in DNA-damage response signaling. Binds specifically to DNA sequences at peri-centromeric chromatin loci. The polypeptide is FLYWCH-type zinc finger-containing protein 1 (Flywch1) (Mus musculus (Mouse)).